A 609-amino-acid chain; its full sequence is UvrABC system protein C (609 aa).

Positions serine 16–valine 94 constitute a GIY-YIG domain. Positions leucine 203–valine 238 constitute a UVR domain.

The protein belongs to the UvrC family. In terms of assembly, interacts with UvrB in an incision complex.

The protein resides in the cytoplasm. Its function is as follows. The UvrABC repair system catalyzes the recognition and processing of DNA lesions. UvrC both incises the 5' and 3' sides of the lesion. The N-terminal half is responsible for the 3' incision and the C-terminal half is responsible for the 5' incision. This chain is UvrABC system protein C, found in Shewanella sediminis (strain HAW-EB3).